The following is a 62-amino-acid chain: uncharacterized protein (62 aa).

This sequence belongs to the asfivirus C62L family.

This is an uncharacterized protein from African swine fever virus (isolate Tick/South Africa/Pretoriuskop Pr4/1996) (ASFV).